A 107-amino-acid chain; its full sequence is Large ribosomal subunit protein P2 (107 aa).

Positions 86–107 (PAAAAAEAEEEDDDDMGFGLFD) are disordered. Residues 92–101 (EAEEEDDDDM) are compositionally biased toward acidic residues.

This sequence belongs to the eukaryotic ribosomal protein P1/P2 family. P1 and P2 exist as dimers at the large ribosomal subunit. In terms of processing, phosphorylated.

In terms of biological role, plays an important role in the elongation step of protein synthesis. This Trypanosoma brucei brucei protein is Large ribosomal subunit protein P2.